The primary structure comprises 393 residues: Riboflavin biosynthesis protein RibBA (393 aa).

The interval 1–200 is DHBP synthase; sequence MQFDNIDSAL…IDDLIEYRKK (200 aa). D-ribulose 5-phosphate is bound by residues 27 to 28, aspartate 32, 139 to 143, and glutamate 163; these read RE and RNGHT. Glutamate 28 provides a ligand contact to Mg(2+). Histidine 142 contacts Mg(2+). Residues 201-393 form a GTP cyclohydrolase II region; it reads LEPEIEFKAK…TKKIKMGHLI (193 aa). 249-253 is a GTP binding site; the sequence is RLHSA. Zn(2+)-binding residues include cysteine 254, cysteine 265, and cysteine 267. Residues glutamine 270, 291–293, and threonine 313 each bind GTP; that span reads EGR. Aspartate 325 functions as the Proton acceptor; for GTP cyclohydrolase activity in the catalytic mechanism. Residue arginine 327 is the Nucleophile; for GTP cyclohydrolase activity of the active site. Residues serine 348 and lysine 353 each coordinate GTP.

This sequence in the N-terminal section; belongs to the DHBP synthase family. It in the C-terminal section; belongs to the GTP cyclohydrolase II family. It depends on Mg(2+) as a cofactor. Mn(2+) serves as cofactor. The cofactor is Zn(2+).

It catalyses the reaction D-ribulose 5-phosphate = (2S)-2-hydroxy-3-oxobutyl phosphate + formate + H(+). It carries out the reaction GTP + 4 H2O = 2,5-diamino-6-hydroxy-4-(5-phosphoribosylamino)-pyrimidine + formate + 2 phosphate + 3 H(+). The protein operates within cofactor biosynthesis; riboflavin biosynthesis; 2-hydroxy-3-oxobutyl phosphate from D-ribulose 5-phosphate: step 1/1. Its pathway is cofactor biosynthesis; riboflavin biosynthesis; 5-amino-6-(D-ribitylamino)uracil from GTP: step 1/4. Functionally, catalyzes the conversion of D-ribulose 5-phosphate to formate and 3,4-dihydroxy-2-butanone 4-phosphate. Its function is as follows. Catalyzes the conversion of GTP to 2,5-diamino-6-ribosylamino-4(3H)-pyrimidinone 5'-phosphate (DARP), formate and pyrophosphate. The sequence is that of Riboflavin biosynthesis protein RibBA from Staphylococcus aureus (strain Mu50 / ATCC 700699).